The following is an 830-amino-acid chain: Kinesin-like protein KIN-14B (830 aa).

The stretch at 56-97 (ENISDDNTESEAKVQKIQDELVSLNAQLKQITLQRREALNNY) forms a coiled coil. Positions 103–425 (NIRVFCRIRP…LGFATRVRSI (323 aa)) constitute a Kinesin motor domain. 182 to 189 (GQTGSGKT) contacts ATP. A coiled-coil region spans residues 434 to 476 (EMKARKETLLIDLGQKVNDLEHECEDIRRKIKNLEESMEHLTG).

Belongs to the TRAFAC class myosin-kinesin ATPase superfamily. Kinesin family. KIN-14 subfamily.

This chain is Kinesin-like protein KIN-14B, found in Oryza sativa subsp. japonica (Rice).